The chain runs to 404 residues: Ubiquitin-like modifier-activating enzyme 5 (404 aa).

Ser45 carries the phosphoserine modification. ATP-binding residues include Gly83, Asp104, Lys127, Asn150, and Asn184. The Zn(2+) site is built by Cys226 and Cys229. The Glycyl thioester intermediate role is filled by Cys250. Zn(2+)-binding residues include Cys303 and Cys308. A UFM1-interacting sequence (UIS) motif is present at residues 334–346 (IIHEDNEWGIELV). The interval 347–377 (SEVSEEELKNSSGPVPDLPEGITVAYTIPKK) is linker. 2 positions are modified to phosphoserine: Ser358 and Ser393. The UFC1-binding sequence (UFC) motif lies at 389–404 (DSGESLEDLMAKMKNM).

Belongs to the ubiquitin-activating E1 family. UBA5 subfamily. Homodimer; homodimerization is required for UFM1 activation. Interacts (via UIS motif) with UFM1; binds UFM1 via a trans-binding mechanism in which UFM1 interacts with distinct sites in both subunits of the UBA5 homodimer. Interacts (via C-terminus) with UFC1. Interacts (via UIS motif) with GABARAPL2 and, with lower affinity, with GABARAP and GABARAPL1.

The protein resides in the cytoplasm. It localises to the nucleus. The protein localises to the endoplasmic reticulum membrane. Its subcellular location is the golgi apparatus. In terms of biological role, E1-like enzyme which specifically catalyzes the first step in ufmylation. Activates UFM1 by first adenylating its C-terminal glycine residue with ATP, and thereafter linking this residue to the side chain of a cysteine residue in E1, yielding a UFM1-E1 thioester and free AMP. Activates UFM1 via a trans-binding mechanism, in which UFM1 interacts with distinct sites in both subunits of the UBA5 homodimer. Trans-binding also promotes stabilization of the UBA5 homodimer, and enhances ATP-binding. Transfer of UFM1 from UBA5 to the E2-like enzyme UFC1 also takes place using a trans mechanism. Ufmylation plays a key role in various processes, such as ribosome recycling, response to DNA damage, interferon response or reticulophagy (also called ER-phagy). Ufmylation is essential for erythroid differentiation of both megakaryocytes and erythrocytes. This Pongo abelii (Sumatran orangutan) protein is Ubiquitin-like modifier-activating enzyme 5.